Consider the following 438-residue polypeptide: MPCTCTWRNWRQWIRPLVAVIYLVSIVVAVPLCVWELQKLEVGIHTKAWFIAGIFLLLTIPISLWVILQHLVHYTQPELQKPIIRILWMVPIYSLDSWIALKYPGIAIYVDTCRECYEAYVIYNFMGFLTNYLTNRYPNLVLILEAKDQQKHFPPLCCCPPWAMGEVLLFRCKLGVLQYTVVRPFTTIVALICELLGIYDEGNFSFSNAWTYLVIINNMSQLFAMYCLLLFYKVLKEELSPIQPVGKFLCVKLVVFVSFWQAVVIALLVKVGVISEKHTWEWQTVEAVATGLQDFIICIEMFLAAIAHHYTFSYKPYVQEAEEGSCFDSFLAMWDVSDIRDDISEQVRRVGRTVRGHPRKKLFPEDQDQNEHTSLLSSSSQDAISIASSMPPSPMGHYQGFGHTVTPQTTPTTAKISDEILSDTIGEKKEPSDKSVDS.

The next 7 helical transmembrane spans lie at 17–37, 48–68, 86–106, 179–199, 212–232, 254–274, and 287–307; these read LVAVIYLVSIVVAVPLCVWEL, AWFIAGIFLLLTIPISLWVIL, ILWMVPIYSLDSWIALKYPGI, YTVVRPFTTIVALICELLGIY, YLVIINNMSQLFAMYCLLLFY, VVFVSFWQAVVIALLVKVGVI, and AVATGLQDFIICIEMFLAAIA. A disordered region spans residues 358-438; sequence PRKKLFPEDQ…KEPSDKSVDS (81 aa). 2 stretches are compositionally biased toward low complexity: residues 374–390 and 404–413; these read SLLSSSSQDAISIASSM and TVTPQTTPTT. The residue at position 422 (Ser422) is a Phosphoserine. Residues 425–438 are compositionally biased toward basic and acidic residues; it reads IGEKKEPSDKSVDS.

This sequence belongs to the TMEM184 family.

The protein resides in the membrane. Functionally, possible tumor suppressor which may play a role in cell growth. In Pongo abelii (Sumatran orangutan), this protein is Transmembrane protein 184C (TMEM184C).